The primary structure comprises 304 residues: Putative S-adenosyl-L-methionine-dependent methyltransferase MAV_4236 (304 aa).

S-adenosyl-L-methionine contacts are provided by residues D129 and 158-159; that span reads DL.

This sequence belongs to the UPF0677 family.

Functionally, exhibits S-adenosyl-L-methionine-dependent methyltransferase activity. The polypeptide is Putative S-adenosyl-L-methionine-dependent methyltransferase MAV_4236 (Mycobacterium avium (strain 104)).